The primary structure comprises 434 residues: Nicotinate phosphoribosyltransferase (434 aa).

H242 carries the post-translational modification Phosphohistidine; by autocatalysis.

This sequence belongs to the NAPRTase family. Post-translationally, transiently phosphorylated on a His residue during the reaction cycle. Phosphorylation strongly increases the affinity for substrates and increases the rate of nicotinate D-ribonucleotide production. Dephosphorylation regenerates the low-affinity form of the enzyme, leading to product release.

The catalysed reaction is nicotinate + 5-phospho-alpha-D-ribose 1-diphosphate + ATP + H2O = nicotinate beta-D-ribonucleotide + ADP + phosphate + diphosphate. The protein operates within cofactor biosynthesis; NAD(+) biosynthesis; nicotinate D-ribonucleotide from nicotinate: step 1/1. Functionally, catalyzes the synthesis of beta-nicotinate D-ribonucleotide from nicotinate and 5-phospho-D-ribose 1-phosphate at the expense of ATP. This is Nicotinate phosphoribosyltransferase from Chelativorans sp. (strain BNC1).